The primary structure comprises 172 residues: Large ribosomal subunit protein uL10 (172 aa).

It belongs to the universal ribosomal protein uL10 family. In terms of assembly, part of the ribosomal stalk of the 50S ribosomal subunit. The N-terminus interacts with L11 and the large rRNA to form the base of the stalk. The C-terminus forms an elongated spine to which L12 dimers bind in a sequential fashion forming a multimeric L10(L12)X complex.

Forms part of the ribosomal stalk, playing a central role in the interaction of the ribosome with GTP-bound translation factors. The chain is Large ribosomal subunit protein uL10 from Chlamydia trachomatis serovar L2 (strain ATCC VR-902B / DSM 19102 / 434/Bu).